We begin with the raw amino-acid sequence, 216 residues long: MTEETPGFEEKPDVPSGATPDDAEPKAADSSEEETAAPAGDLDPTVGLTAQLDQARTALGERTADLQRLQAEYQNYRRRVERDRVTVKEIAVANLLSELLPVLDDVGRARDHGELVGGFKSVAESLETTVAKLGLQQFGKEGEPFDPTIHEALMHSYAPDVTETTCVAILQPGYRIGERTIRPARVAVAEPQPGATPAAAKEEKTDDEESGGTEEV.

Disordered regions lie at residues 1 to 45 and 185 to 216; these read MTEE…LDPT and RVAVAEPQPGATPAAAKEEKTDDEESGGTEEV. Residues 205–216 show a composition bias toward acidic residues; sequence TDDEESGGTEEV.

This sequence belongs to the GrpE family. In terms of assembly, homodimer.

It is found in the cytoplasm. Functionally, participates actively in the response to hyperosmotic and heat shock by preventing the aggregation of stress-denatured proteins, in association with DnaK and GrpE. It is the nucleotide exchange factor for DnaK and may function as a thermosensor. Unfolded proteins bind initially to DnaJ; upon interaction with the DnaJ-bound protein, DnaK hydrolyzes its bound ATP, resulting in the formation of a stable complex. GrpE releases ADP from DnaK; ATP binding to DnaK triggers the release of the substrate protein, thus completing the reaction cycle. Several rounds of ATP-dependent interactions between DnaJ, DnaK and GrpE are required for fully efficient folding. The protein is Protein GrpE of Streptomyces griseus subsp. griseus (strain JCM 4626 / CBS 651.72 / NBRC 13350 / KCC S-0626 / ISP 5235).